The chain runs to 102 residues: Large ribosomal subunit protein bL21 (102 aa).

The protein belongs to the bacterial ribosomal protein bL21 family. Part of the 50S ribosomal subunit. Contacts protein L20.

Functionally, this protein binds to 23S rRNA in the presence of protein L20. In Bacillus cytotoxicus (strain DSM 22905 / CIP 110041 / 391-98 / NVH 391-98), this protein is Large ribosomal subunit protein bL21.